A 190-amino-acid chain; its full sequence is Imidazoleglycerol-phosphate dehydratase (190 aa).

This sequence belongs to the imidazoleglycerol-phosphate dehydratase family.

The protein localises to the cytoplasm. It carries out the reaction D-erythro-1-(imidazol-4-yl)glycerol 3-phosphate = 3-(imidazol-4-yl)-2-oxopropyl phosphate + H2O. Its pathway is amino-acid biosynthesis; L-histidine biosynthesis; L-histidine from 5-phospho-alpha-D-ribose 1-diphosphate: step 6/9. In Methanococcus maripaludis (strain C7 / ATCC BAA-1331), this protein is Imidazoleglycerol-phosphate dehydratase.